A 207-amino-acid polypeptide reads, in one-letter code: Outer-membrane lipoprotein LolB (207 aa).

Residues 1–23 (MINLRRFTKFTLAGLTALSLLGG) form the signal peptide. A lipid anchor (N-palmitoyl cysteine) is attached at C24. A lipid anchor (S-diacylglycerol cysteine) is attached at C24.

The protein belongs to the LolB family. In terms of assembly, monomer.

Its subcellular location is the cell outer membrane. In terms of biological role, plays a critical role in the incorporation of lipoproteins in the outer membrane after they are released by the LolA protein. This is Outer-membrane lipoprotein LolB from Shewanella amazonensis (strain ATCC BAA-1098 / SB2B).